A 324-amino-acid chain; its full sequence is Polycomb complex protein BMI-1 (324 aa).

Residues 18–57 form an RING-type zinc finger; sequence CVLCGGYFIDATTIIECLHSFCKTCIVRYLETSKYCPICD. Positions 81–95 match the Nuclear localization signal motif; it reads KLVPGLFKNEMKRRR. Positions 160-180 are interaction with PHC2; it reads RYLRCPAAMTVMHLRKFLRSK. The interaction with E4F1 stretch occupies residues 162–226; the sequence is LRCPAAMTVM…GPLPLKYRVR (65 aa). Positions 232–324 are disordered; sequence MKMSHQRDGL…LNGSSATSSG (93 aa). A compositionally biased stretch (low complexity) spans 264–276; sequence PSTSSCLPSPSTP. Positions 277–307 are enriched in polar residues; sequence VQSPHPQFPHISSTMNGTSNSPSANHQSSFA. The segment covering 313-324 has biased composition (low complexity); that stretch reads SSLNGSSATSSG.

In terms of assembly, component of a PRC1-like complex. Identified in a PRC1-like HPRC-H complex with CBX2, CBX4, CBX8, PHC1, PHC2, PHC3, RING1 and RNF2. Interacts with RNF2/RING2. Interacts with RING1. Part of a complex that contains RNF2, UB2D3 and BMI1, where RNF2 and BMI1 form a tight heterodimer, and UB2D3 interacts only with RNF2. The complex composed of RNF2, UB2D3 and BMI1 binds nucleosomes, and has activity only with nucleosomal histone H2A. Interacts with CBX7 and CBX8. Interacts with SPOP. Part of a complex consisting of BMI1, CUL3 and SPOP. Interacts with E4F1. Interacts with PHC2. Interacts with zinc finger protein ZNF277. May be part of a complex including at least ZNF277, BMI1 and RNF2/RING2. In terms of processing, may be polyubiquitinated; which does not lead to proteasomal degradation. Monoubiquitinated. In terms of tissue distribution, detected in most organs with high expression levels in thymus, heart, brain and testis.

It localises to the nucleus. It is found in the cytoplasm. Component of a Polycomb group (PcG) multiprotein PRC1-like complex, a complex class required to maintain the transcriptionally repressive state of many genes, including Hox genes, throughout development. PcG PRC1 complex acts via chromatin remodeling and modification of histones; it mediates monoubiquitination of histone H2A 'Lys-119', rendering chromatin heritably changed in its expressibility. The complex composed of RNF2, UB2D3 and BMI1 binds nucleosomes, and has activity only with nucleosomal histone H2A. In the PRC1-like complex, regulates the E3 ubiquitin-protein ligase activity of RNF2/RING2. The protein is Polycomb complex protein BMI-1 (Bmi1) of Mus musculus (Mouse).